A 261-amino-acid polypeptide reads, in one-letter code: Antiviral protein S (261 aa).

2 cysteine pairs are disulfide-bonded: Cys-34/Cys-258 and Cys-84/Cys-105. Residue Glu-175 is part of the active site.

It belongs to the ribosome-inactivating protein family. Type 1 RIP subfamily.

It carries out the reaction Endohydrolysis of the N-glycosidic bond at one specific adenosine on the 28S rRNA.. Functionally, inhibits viral infection of plants, and protein synthesis in vitro. The sequence is that of Antiviral protein S from Phytolacca americana (American pokeweed).